The primary structure comprises 510 residues: Bifunctional pantoate ligase/cytidylate kinase (510 aa).

Residues 1-276 (MKKVIIRKTE…CGETRLIDHV (276 aa)) form a pantoate--beta-alanine ligase region. Position 29–36 (29–36 (MGNLHNGH)) interacts with ATP. Catalysis depends on His-36, which acts as the Proton donor. A (R)-pantoate-binding site is contributed by Gln-61. Gln-61 contacts beta-alanine. 150–153 (GEKD) provides a ligand contact to ATP. Gln-156 contributes to the (R)-pantoate binding site. 187-190 (LSSR) lines the ATP pocket. A cytidylate kinase region spans residues 277–510 (FLMKRRPIIA…DKIPKETEIK (234 aa)).

This sequence in the N-terminal section; belongs to the pantothenate synthetase family. In the C-terminal section; belongs to the cytidylate kinase family. Type 1 subfamily.

The protein localises to the cytoplasm. It carries out the reaction (R)-pantoate + beta-alanine + ATP = (R)-pantothenate + AMP + diphosphate + H(+). The catalysed reaction is CMP + ATP = CDP + ADP. The enzyme catalyses dCMP + ATP = dCDP + ADP. It participates in cofactor biosynthesis; (R)-pantothenate biosynthesis; (R)-pantothenate from (R)-pantoate and beta-alanine: step 1/1. Catalyzes the condensation of pantoate with beta-alanine in an ATP-dependent reaction via a pantoyl-adenylate intermediate. Its function is as follows. Catalyzes the transfer of a phosphate group from ATP to either CMP or dCMP to form CDP or dCDP and ADP, respectively. In Prochlorococcus marinus (strain MIT 9215), this protein is Bifunctional pantoate ligase/cytidylate kinase.